A 1131-amino-acid chain; its full sequence is Filamin A-interacting protein 1-like (1131 aa).

Positions 1–62 are disordered; the sequence is MRSRSSNAEG…KSHTGKGHHT (62 aa). Positions 50–62 are enriched in basic and acidic residues; the sequence is VSEKSHTGKGHHT. Coiled coils occupy residues 139–583 and 610–780; these read NELD…LSKV and SKST…KSLR. Ser789 bears the Phosphoserine mark. Phosphothreonine occurs at positions 984 and 992. Ser1050 bears the Phosphoserine mark.

This sequence belongs to the FILIP1 family.

It is found in the cytoplasm. The protein resides in the membrane. The protein localises to the nucleus. Functionally, acts as a regulator of the antiangiogenic activity on endothelial cells. When overexpressed in endothelial cells, leads to inhibition of cell proliferation and migration and an increase in apoptosis. Inhibits melanoma growth When expressed in tumor-associated vasculature. The chain is Filamin A-interacting protein 1-like (Filip1l) from Mus musculus (Mouse).